We begin with the raw amino-acid sequence, 127 residues long: Two-component response regulator ORR41 (127 aa).

Residues 7–125 (RVLLVEDEEI…KLGVILAKFR (119 aa)) enclose the Response regulatory domain. Asp60 is subject to 4-aspartylphosphate.

Belongs to the ARR family. Type-C subfamily. Two-component system major event consists of a His-to-Asp phosphorelay between a sensor histidine kinase (HK) and a response regulator (RR). In plants, the His-to-Asp phosphorelay involves an additional intermediate named Histidine-containing phosphotransfer protein (HPt). This multistep phosphorelay consists of a His-Asp-His-Asp sequential transfer of a phosphate group between first a His and an Asp of the HK protein, followed by the transfer to a conserved His of the HPt protein and finally the transfer to an Asp in the receiver domain of the RR protein.

In terms of biological role, functions as a response regulator involved in His-to-Asp phosphorelay signal transduction system. Phosphorylation of the Asp residue in the receiver domain activates the ability of the protein to promote the transcription of target genes. May directly activate some type-A response regulators in response to cytokinins. The protein is Two-component response regulator ORR41 of Oryza sativa subsp. japonica (Rice).